The sequence spans 465 residues: Na(+)-translocating NADH-quinone reductase subunit A (465 aa).

It belongs to the NqrA family. As to quaternary structure, composed of six subunits; NqrA, NqrB, NqrC, NqrD, NqrE and NqrF.

It catalyses the reaction a ubiquinone + n Na(+)(in) + NADH + H(+) = a ubiquinol + n Na(+)(out) + NAD(+). NQR complex catalyzes the reduction of ubiquinone-1 to ubiquinol by two successive reactions, coupled with the transport of Na(+) ions from the cytoplasm to the periplasm. NqrA to NqrE are probably involved in the second step, the conversion of ubisemiquinone to ubiquinol. This is Na(+)-translocating NADH-quinone reductase subunit A from Chlamydia trachomatis serovar L2 (strain ATCC VR-902B / DSM 19102 / 434/Bu).